We begin with the raw amino-acid sequence, 358 residues long: Glutamate--cysteine ligase (358 aa).

This sequence belongs to the glutamate--cysteine ligase type 2 family. YbdK subfamily.

The catalysed reaction is L-cysteine + L-glutamate + ATP = gamma-L-glutamyl-L-cysteine + ADP + phosphate + H(+). Catalyzes the synthesis of gamma-glutamylcysteine (gamma-GC), the main low-molecular-weight thiol compound instead of glutathione in halophilic archaea. The sequence is that of Glutamate--cysteine ligase from Haloferax volcanii (strain ATCC 29605 / DSM 3757 / JCM 8879 / NBRC 14742 / NCIMB 2012 / VKM B-1768 / DS2) (Halobacterium volcanii).